The following is a 170-amino-acid chain: Sec-independent protein translocase protein TatB (170 aa).

A helical membrane pass occupies residues 1–21 (MIDLGISKLALIGAVALIVIG).

This sequence belongs to the TatB family. In terms of assembly, the Tat system comprises two distinct complexes: a TatABC complex, containing multiple copies of TatA, TatB and TatC subunits, and a separate TatA complex, containing only TatA subunits. Substrates initially bind to the TatABC complex, which probably triggers association of the separate TatA complex to form the active translocon.

The protein resides in the cell inner membrane. Part of the twin-arginine translocation (Tat) system that transports large folded proteins containing a characteristic twin-arginine motif in their signal peptide across membranes. Together with TatC, TatB is part of a receptor directly interacting with Tat signal peptides. TatB may form an oligomeric binding site that transiently accommodates folded Tat precursor proteins before their translocation. The protein is Sec-independent protein translocase protein TatB of Cupriavidus necator (strain ATCC 17699 / DSM 428 / KCTC 22496 / NCIMB 10442 / H16 / Stanier 337) (Ralstonia eutropha).